A 299-amino-acid chain; its full sequence is MLESHLIIYFLLAVIQFLLGTFTNGIIVVVNGIDLIKHRKMAPLDLLLSCLAVSRIFLQLFIFYINVVVIFLIEFITCSASCAFLVFVNELELWLATWLGVFYCAKVASVLHPLFIWLKMRISKSVPWMILGSLLYVSMICIFHIKYTGFMVPYFLRNLFFQNATIQTEVKQAIQIFSFVAELLVPLLIFLVAVLLLIFSLGRHTRQMRNTVAGSRVPGRGAHISALLSILSFLILYISHYLIKTFLSSLKFHVKRFVFLFCILVIGTYPSGHSLILILGNPKLKQNTKKFLCHSKCCQ.

The Extracellular segment spans residues 1–9; sequence MLESHLIIY. The helical transmembrane segment at 10-30 threads the bilayer; that stretch reads FLLAVIQFLLGTFTNGIIVVV. The Cytoplasmic segment spans residues 31 to 55; that stretch reads NGIDLIKHRKMAPLDLLLSCLAVSR. A helical transmembrane segment spans residues 56–76; it reads IFLQLFIFYINVVVIFLIEFI. Over 77 to 81 the chain is Extracellular; that stretch reads TCSAS. The helical transmembrane segment at 82–102 threads the bilayer; that stretch reads CAFLVFVNELELWLATWLGVF. The Cytoplasmic segment spans residues 103-124; it reads YCAKVASVLHPLFIWLKMRISK. A helical membrane pass occupies residues 125 to 145; sequence SVPWMILGSLLYVSMICIFHI. Over 146–178 the chain is Extracellular; sequence KYTGFMVPYFLRNLFFQNATIQTEVKQAIQIFS. Asn-163 is a glycosylation site (N-linked (GlcNAc...) asparagine). A helical transmembrane segment spans residues 179–199; sequence FVAELLVPLLIFLVAVLLLIF. The Cytoplasmic segment spans residues 200 to 222; that stretch reads SLGRHTRQMRNTVAGSRVPGRGA. The chain crosses the membrane as a helical span at residues 223–243; that stretch reads HISALLSILSFLILYISHYLI. The Extracellular segment spans residues 244–257; it reads KTFLSSLKFHVKRF. A helical transmembrane segment spans residues 258-278; that stretch reads VFLFCILVIGTYPSGHSLILI. The Cytoplasmic portion of the chain corresponds to 279–299; that stretch reads LGNPKLKQNTKKFLCHSKCCQ.

It belongs to the G-protein coupled receptor T2R family.

It is found in the membrane. Its function is as follows. Receptor that may play a role in the perception of bitterness and is gustducin-linked. May play a role in sensing the chemical composition of the gastrointestinal content. The activity of this receptor may stimulate alpha gustducin, mediate PLC-beta-2 activation and lead to the gating of TRPM5. In Chlorocebus aethiops (Green monkey), this protein is Taste receptor type 2 member 1 (TAS2R1).